The sequence spans 451 residues: TERF1-interacting nuclear factor 2 (451 aa).

The residue at position 2 (Ala2) is an N-acetylalanine. The segment at 229-257 (NPLPKAKPGTHLPQGPSSRTHPEPLAGRH) is disordered. Positions 256-278 (RHFNLAPLGRRRVQSQWASTRGG) match the TBM motif. The Nuclear localization signal signature appears at 262-268 (PLGRRRV). The residue at position 295 (Ser295) is a Phosphoserine. Glycyl lysine isopeptide (Lys-Gly) (interchain with G-Cter in SUMO2) cross-links involve residues Lys302, Lys306, Lys341, and Lys353.

As to quaternary structure, monomer. Found in a complex with POT1; TERF1 and TNKS1. Component of the shelterin complex (telosome) composed of TERF1, TERF2, TINF2, TERF2IP ACD and POT1. Interacts with TERF1, TERF2 and ACD. In terms of tissue distribution, detected in heart, brain, placenta, lung, liver, skeletal muscle, kidney and pancreas.

It localises to the nucleus. The protein localises to the chromosome. It is found in the telomere. The protein resides in the nucleus matrix. Functionally, component of the shelterin complex (telosome) that is involved in the regulation of telomere length and protection. Shelterin associates with arrays of double-stranded TTAGGG repeats added by telomerase and protects chromosome ends; without its protective activity, telomeres are no longer hidden from the DNA damage surveillance and chromosome ends are inappropriately processed by DNA repair pathways. Plays a role in shelterin complex assembly. Isoform 1 may have additional role in tethering telomeres to the nuclear matrix. This chain is TERF1-interacting nuclear factor 2 (TINF2), found in Homo sapiens (Human).